An 88-amino-acid polypeptide reads, in one-letter code: MLDVEAQEPPKGKWSTPPFDPRFPSQNQIRNCYQNFLDYHRCLKTRTRRGKSTQPCEYYFRVYHSLCPISWVESWNEQIKNGIFAGKI.

The tract at residues 1–22 (MLDVEAQEPPKGKWSTPPFDPR) is disordered. The CHCH domain maps to 29 to 75 (IRNCYQNFLDYHRCLKTRTRRGKSTQPCEYYFRVYHSLCPISWVESW). Residues 32 to 42 (CYQNFLDYHRC) carry the Cx9C motif motif. 2 disulfide bridges follow: C32/C67 and C42/C56. A Cx10C motif motif is present at residues 56 to 67 (CEYYFRVYHSLC).

Belongs to the cytochrome c oxidase subunit 6B family. Component of the cytochrome c oxidase (complex IV, CIV), a multisubunit enzyme composed of 14 subunits. The complex is composed of a catalytic core of 3 subunits MT-CO1, MT-CO2 and MT-CO3, encoded in the mitochondrial DNA, and 11 supernumerary subunits COX4I1 (or COX4I2), COX5A, COX5B, COX6A1 (or COX6A2), COX6B1 (or COX6B2), COX6C, COX7A2 (or COX7A1), COX7B, COX7C, COX8A and NDUFA4, which are encoded in the nuclear genome. The complex exists as a monomer or a dimer and forms supercomplexes (SCs) in the inner mitochondrial membrane with NADH-ubiquinone oxidoreductase (complex I, CI) and ubiquinol-cytochrome c oxidoreductase (cytochrome b-c1 complex, complex III, CIII), resulting in different assemblies (supercomplex SCI(1)III(2)IV(1) and megacomplex MCI(2)III(2)IV(2)). In terms of tissue distribution, testis specific. Weak expression in thymus and heart. Expressed in cancer cell lines.

Its subcellular location is the mitochondrion inner membrane. It participates in energy metabolism; oxidative phosphorylation. Component of the cytochrome c oxidase, the last enzyme in the mitochondrial electron transport chain which drives oxidative phosphorylation. The respiratory chain contains 3 multisubunit complexes succinate dehydrogenase (complex II, CII), ubiquinol-cytochrome c oxidoreductase (cytochrome b-c1 complex, complex III, CIII) and cytochrome c oxidase (complex IV, CIV), that cooperate to transfer electrons derived from NADH and succinate to molecular oxygen, creating an electrochemical gradient over the inner membrane that drives transmembrane transport and the ATP synthase. Cytochrome c oxidase is the component of the respiratory chain that catalyzes the reduction of oxygen to water. Electrons originating from reduced cytochrome c in the intermembrane space (IMS) are transferred via the dinuclear copper A center (CU(A)) of subunit 2 and heme A of subunit 1 to the active site in subunit 1, a binuclear center (BNC) formed by heme A3 and copper B (CU(B)). The BNC reduces molecular oxygen to 2 water molecules using 4 electrons from cytochrome c in the IMS and 4 protons from the mitochondrial matrix. The sequence is that of Cytochrome c oxidase subunit 6B2 (COX6B2) from Homo sapiens (Human).